Consider the following 246-residue polypeptide: MASNTLMSCGIPAVCPSFLSSTKSKFAAAMPVYVGATNFMSRFSMSADWMPGQPRPSYLDGSAPGDFGFDSLGLGEVPANLERYKESELIHCRWAMLAVPGIIVPEALGLGNWVKAQEWAAIPGGQATYLGQPVPWGTLPTILAIEFLAIAFVEHQRSMEKDSEKKKYPGGAFDPLGYSKDPAKFEELKVKEIKNGRLALLAIVGFCVQQSAYLGTGPLENLATHLADPWHNNIGDVIIPKGIFPN.

The transit peptide at 1–45 directs the protein to the chloroplast; it reads MASNTLMSCGIPAVCPSFLSSTKSKFAAAMPVYVGATNFMSRFSM. Tryptophan 49 serves as a coordination point for chlorophyll b. Residues phenylalanine 69, glutamate 88, and histidine 91 each contribute to the chlorophyll a site. Arginine 93 is a chlorophyll b binding site. The helical transmembrane segment at 94 to 114 threads the bilayer; that stretch reads WAMLAVPGIIVPEALGLGNWV. A chlorophyll a-binding site is contributed by leucine 130. The helical transmembrane segment at 133-153 threads the bilayer; sequence PVPWGTLPTILAIEFLAIAFV. Valine 134, glutamate 154, and arginine 157 together coordinate chlorophyll b. Chlorophyll a-binding residues include lysine 191, glutamate 192, asparagine 195, arginine 197, glutamine 209, and histidine 225.

This sequence belongs to the light-harvesting chlorophyll a/b-binding (LHC) protein family. The LHC complex consists of chlorophyll a-b binding proteins. Requires Binds at least 14 chlorophylls (8 Chl-a and 6 Chl-b) and carotenoids such as lutein and neoxanthin. as cofactor. In terms of processing, photoregulated by reversible phosphorylation of its threonine residues.

It is found in the plastid. The protein resides in the chloroplast thylakoid membrane. In terms of biological role, the light-harvesting complex (LHC) functions as a light receptor, it captures and delivers excitation energy to photosystems with which it is closely associated. In Solanum lycopersicum (Tomato), this protein is Chlorophyll a-b binding protein 6A, chloroplastic (CAB6A).